Reading from the N-terminus, the 242-residue chain is Probable transcriptional regulatory protein EUBREC_1961 (242 aa).

The protein belongs to the TACO1 family.

The protein resides in the cytoplasm. This is Probable transcriptional regulatory protein EUBREC_1961 from Agathobacter rectalis (strain ATCC 33656 / DSM 3377 / JCM 17463 / KCTC 5835 / VPI 0990) (Eubacterium rectale).